Consider the following 543-residue polypeptide: Aluminum-activated malate transporter 14 (543 aa).

Transmembrane regions (helical) follow at residues 56-76, 80-100, 106-126, 129-149, 164-184, and 191-211; these read VGVS…FKGI, AIWA…ATLC, GLGT…ANDS, IFRA…ITYL, LIFL…DTVI, and FYTI…VFPI. Positions 416–438 are disordered; it reads DTNEAASYQNTGTPRGERMSRFG. Residues 419–428 are compositionally biased toward polar residues; the sequence is EAASYQNTGT. Residues 445-472 are a coiled coil; it reads RLRADTLERRSAAATNERKILRQQLSRI.

This sequence belongs to the aromatic acid exporter (TC 2.A.85) family.

Its subcellular location is the membrane. In terms of biological role, malate transporter. This Arabidopsis thaliana (Mouse-ear cress) protein is Aluminum-activated malate transporter 14 (ALMT14).